A 337-amino-acid polypeptide reads, in one-letter code: DNA-directed RNA polymerase subunit alpha (337 aa).

An alpha N-terminal domain (alpha-NTD) region spans residues 1 to 233 (MVREEVAVST…DLFIPFLHAE (233 aa)). The alpha C-terminal domain (alpha-CTD) stretch occupies residues 266 to 337 (GIALKCIFID…FTIDLPKNKF (72 aa)).

The protein belongs to the RNA polymerase alpha chain family. In plastids the minimal PEP RNA polymerase catalytic core is composed of four subunits: alpha, beta, beta', and beta''. When a (nuclear-encoded) sigma factor is associated with the core the holoenzyme is formed, which can initiate transcription.

The protein localises to the plastid. The protein resides in the chloroplast. The catalysed reaction is RNA(n) + a ribonucleoside 5'-triphosphate = RNA(n+1) + diphosphate. In terms of biological role, DNA-dependent RNA polymerase catalyzes the transcription of DNA into RNA using the four ribonucleoside triphosphates as substrates. The protein is DNA-directed RNA polymerase subunit alpha of Liriodendron tulipifera (Tuliptree).